The chain runs to 101 residues: Protein translation factor SUI1 homolog (101 aa).

Belongs to the SUI1 family.

In Methanosphaera stadtmanae (strain ATCC 43021 / DSM 3091 / JCM 11832 / MCB-3), this protein is Protein translation factor SUI1 homolog.